Here is a 164-residue protein sequence, read N- to C-terminus: Transforming protein STP (164 aa).

Residues 1-41 are disordered; that stretch reads MARGLGEGDPQENDESNGDPPHNTDERSDGDDGPTPYLPVT. A zinc finger lies at 122 to 135; that stretch reads HSEHEQEGDKCTDC. The chain crosses the membrane as a helical span at residues 136–161; it reads SVTILLLLVIIVLLLIIIGLMLVIMF.

The protein localises to the membrane. Functionally, stp is required for transformation, but it is not required for replication of the virus. The T-lymphocyte is the target cell for transformation by herpesvirus saimiri. This Saimiriine herpesvirus 2 (strain 11) (SaHV-2) protein is Transforming protein STP (1).